A 358-amino-acid polypeptide reads, in one-letter code: Probable (S)-tetrahydroprotoberberine N-methyltransferase 2 (358 aa).

S-adenosyl-L-methionine contacts are provided by S98, G136, N160, Q164, D186, V187, and I202. C333 is an active-site residue.

It belongs to the CFA/CMAS family. As to quaternary structure, homodimer.

It localises to the cytoplasm. It carries out the reaction (S)-stylopine + S-adenosyl-L-methionine = (S)-cis-N-methylstylopine + S-adenosyl-L-homocysteine. The enzyme catalyses (S)-tetrahydropalmatine + S-adenosyl-L-methionine = (S)-cis-N-methyltetrahydropalmatine + S-adenosyl-L-homocysteine. It functions in the pathway alkaloid biosynthesis. N-methyltransferase with a strict substrate specificity for (R,S)-tetrahydropalmatine or (R,S)-stylopine. The protein is Probable (S)-tetrahydroprotoberberine N-methyltransferase 2 of Papaver bracteatum (Great scarlet poppy).